A 538-amino-acid chain; its full sequence is MPAPTQLFFPLVRNCELSRIYGTACYCHHKHLCCSPPYIPQNRLRYTPHPAYATFCRPRENWWQYTQGRRYASTPQKFYLTPPQVNSILKANEYSFKVPEFDGKNVSSILGFDSNQLPANAPIEDRRSAATCLQTRGMLLGVFDGHAGCACSQAVSERLFYYIAVSLLPHETLLEIENAVESGRALLPILQWHKHPNDYFSKEASKLYFNSLRTYWQELIDLNTGESADIDVKEALINAFKRLDNDISLEAQVGDPNSFLNYLVLRVAFSGATACVAHVDGVDLHVANTGDSRAMLGVQEEDGSWSAVTLSNDHNAQNERELERLKLEHPKNEAKSVVKQDRLLGLLMPFRAFGDVKFKWSIDLQKRVIESGPDQLNDNEYTKFIPPNYHTPPYLTAEPEVTYHRLRPQDKFLVLATDGLWETMHRQDVVRIVGEYLTGMHHQQPIAVGGYKVTLGQMHGLLTERRAKMSSVFEDQNAATHLIRHAVGNNEFGAVDHERLSKMLSLPEELARMYRDDITIIVVQFNSHVVGAYQNQEQ.

A mitochondrion-targeting transit peptide spans 1 to 71; sequence MPAPTQLFFP…WWQYTQGRRY (71 aa). A PPM-type phosphatase domain is found at 109–525; it reads ILGFDSNQLP…DDITIIVVQF (417 aa). 2 residues coordinate Mn(2+): Asp-144 and Gly-145. Lys-202 carries the N6-acetyllysine modification. Asp-418 and Asp-516 together coordinate Mn(2+).

The protein belongs to the PP2C family. Heterodimer of a catalytic (PDP1) and a regulatory (PDPR) subunit. Mn(2+) is required as a cofactor. Requires Mg(2+) as cofactor.

The protein resides in the mitochondrion. The catalysed reaction is O-phospho-L-seryl-[pyruvate dehydrogenase E1 alpha subunit] + H2O = L-seryl-[pyruvate dehydrogenase E1 alpha subunit] + phosphate. Magnesium-dependent and calcium-stimulated. PDP1 activity strongly depends on its Ca(2+)-dependent binding to the lipoyl domain of E2 subunit of component of the pyruvate dehydrogenase complex. Functionally, mitochondrial enzyme that catalyzes the dephosphorylation and concomitant reactivation of the alpha subunit of the E1 component of the pyruvate dehydrogenase complex (PDC), thereby stimulating the conversion of pyruvate into acetyl-CoA. The protein is [Pyruvate dehydrogenase [acetyl-transferring]]-phosphatase 1, mitochondrial (Pdp1) of Mus musculus (Mouse).